A 761-amino-acid polypeptide reads, in one-letter code: Cyclin-D-binding Myb-like transcription factor 1 (761 aa).

The tract at residues 1–237 (MSTVEEDSDT…TPEEIEKLKE (237 aa)) is interaction with CCND2. The tract at residues 24–51 (DTDGNLILHCPQNDPDEVDSEDSTEPPH) is disordered. Residues 37–47 (DPDEVDSEDST) are compositionally biased toward acidic residues. Residues 87 to 170 (VTMTATTEVA…IDILMNNIER (84 aa)) form a required for transcriptional activation region. The required for DNA-binding stretch occupies residues 87-458 (VTMTATTEVA…DNTAISPSPM (372 aa)). Residues 176 to 761 (GIKDATEIIF…KDVEDLVNCH (586 aa)) form an interaction with CCND1, CCND2 and CCND3 region. Residues 225–263 (GKYTPEEIEKLKELRIKHGNDWATIGAALGRSASSVKDR) enclose the Myb-like 1 domain. The HTH myb-type domain occupies 268–333 (KDTCNTGKWT…KWLNYLNWKQ (66 aa)). A DNA-binding region (H-T-H motif) is located at residues 306-329 (WAAVAERVGTRSEKQCRSKWLNYL). Residues 339 to 388 (WTKEDEINLILRIAELDVADENDINWDLLAEGWSSVRSPQWLRSKWWTIK) enclose the Myb-like 2 domain. Residues 459-761 (AALQIPVQIT…KDVEDLVNCH (303 aa)) form a required for transcriptional activation region. Disordered stretches follow at residues 584–625 (SLSQ…MTIQ) and 740–761 (GSSL…VNCH).

This sequence belongs to the DMTF1 family. Interacts with the D-type cyclins CCND1, CCND2 and CCND3. Interaction with D-type cyclins may modulate transcriptional activation by this protein. Phosphorylated by the cyclin-D2/CDK4, cyclin-D3/CDK4 and cyclin-D2/CDK6 complexes and to a lesser extent by the cyclin-D1/CDK4 complex. In terms of tissue distribution, ubiquitously expressed (at mRNA level). Expressed in brain, intestine, kidney, lung, pancreas, skin, spleen and tongue (at protein level). Expressed at high levels in testis and thymus (at protein level). In all tissues examined, expression is predominant in non-proliferating and differentiated cell types. These include epithelial, interstitial and smooth muscle cells of the intestine, differentiated spermatids, sperm and interstitial cells of the testis, and lymphoid cells of the medullary compartment of the thymus.

It localises to the nucleus. Its function is as follows. Transcriptional activator which activates the CDKN2A/ARF locus in response to Ras-Raf signaling, thereby promoting p53/TP53-dependent growth arrest. May also cooperate with MYB to activate transcription of the ANPEP gene. Binds to the consensus sequence 5'-CCCG[GT]ATGT-3'. The sequence is that of Cyclin-D-binding Myb-like transcription factor 1 (Dmtf1) from Mus musculus (Mouse).